The primary structure comprises 279 residues: Bifunctional protein FolD (279 aa).

Residues 165–167 (GRS), Ser190, and Ile231 each bind NADP(+).

The protein belongs to the tetrahydrofolate dehydrogenase/cyclohydrolase family. As to quaternary structure, homodimer.

It carries out the reaction (6R)-5,10-methylene-5,6,7,8-tetrahydrofolate + NADP(+) = (6R)-5,10-methenyltetrahydrofolate + NADPH. The enzyme catalyses (6R)-5,10-methenyltetrahydrofolate + H2O = (6R)-10-formyltetrahydrofolate + H(+). It participates in one-carbon metabolism; tetrahydrofolate interconversion. Its function is as follows. Catalyzes the oxidation of 5,10-methylenetetrahydrofolate to 5,10-methenyltetrahydrofolate and then the hydrolysis of 5,10-methenyltetrahydrofolate to 10-formyltetrahydrofolate. This Halalkalibacterium halodurans (strain ATCC BAA-125 / DSM 18197 / FERM 7344 / JCM 9153 / C-125) (Bacillus halodurans) protein is Bifunctional protein FolD.